The primary structure comprises 297 residues: Rhomboid-type serine protease 2 (297 aa).

6 helical membrane-spanning segments follow: residues Ile-14–Leu-34, Ile-60–Leu-80, Ile-98–Phe-118, Pro-120–Ile-140, Leu-155–Pro-175, and Phe-179–Val-199. Ser-128 functions as the Nucleophile in the catalytic mechanism. Residue His-182 is part of the active site. Residues Asp-268 to Gln-297 are disordered. Over residues Ser-275–Gln-297 the composition is skewed to polar residues.

It belongs to the peptidase S54 family.

It is found in the golgi apparatus membrane. The protein resides in the golgi apparatus. Its subcellular location is the cis-Golgi network membrane. The catalysed reaction is Cleaves type-1 transmembrane domains using a catalytic dyad composed of serine and histidine that are contributed by different transmembrane domains.. Functionally, probable rhomboid-type serine protease that catalyzes intramembrane proteolysis. This is Rhomboid-type serine protease 2 (RBD2) from Yarrowia lipolytica (strain CLIB 122 / E 150) (Yeast).